A 94-amino-acid polypeptide reads, in one-letter code: Pyrimidine/purine nucleoside phosphorylase (94 aa).

It belongs to the nucleoside phosphorylase PpnP family.

It carries out the reaction a purine D-ribonucleoside + phosphate = a purine nucleobase + alpha-D-ribose 1-phosphate. The enzyme catalyses adenosine + phosphate = alpha-D-ribose 1-phosphate + adenine. It catalyses the reaction cytidine + phosphate = cytosine + alpha-D-ribose 1-phosphate. The catalysed reaction is guanosine + phosphate = alpha-D-ribose 1-phosphate + guanine. It carries out the reaction inosine + phosphate = alpha-D-ribose 1-phosphate + hypoxanthine. The enzyme catalyses thymidine + phosphate = 2-deoxy-alpha-D-ribose 1-phosphate + thymine. It catalyses the reaction uridine + phosphate = alpha-D-ribose 1-phosphate + uracil. The catalysed reaction is xanthosine + phosphate = alpha-D-ribose 1-phosphate + xanthine. Its function is as follows. Catalyzes the phosphorolysis of diverse nucleosides, yielding D-ribose 1-phosphate and the respective free bases. Can use uridine, adenosine, guanosine, cytidine, thymidine, inosine and xanthosine as substrates. Also catalyzes the reverse reactions. The protein is Pyrimidine/purine nucleoside phosphorylase of Pseudomonas fluorescens (strain Pf0-1).